The sequence spans 108 residues: UPF0235 protein APE_0182.1 (108 aa).

The protein belongs to the UPF0235 family.

The chain is UPF0235 protein APE_0182.1 from Aeropyrum pernix (strain ATCC 700893 / DSM 11879 / JCM 9820 / NBRC 100138 / K1).